A 239-amino-acid polypeptide reads, in one-letter code: Probable 2-phosphosulfolactate phosphatase (239 aa).

This sequence belongs to the ComB family. Mg(2+) is required as a cofactor.

It carries out the reaction (2R)-O-phospho-3-sulfolactate + H2O = (2R)-3-sulfolactate + phosphate. This is Probable 2-phosphosulfolactate phosphatase from Clostridium botulinum (strain Okra / Type B1).